The following is a 349-amino-acid chain: Phosphoribosylformylglycinamidine cyclo-ligase (349 aa).

The protein belongs to the AIR synthase family.

It localises to the cytoplasm. It carries out the reaction 2-formamido-N(1)-(5-O-phospho-beta-D-ribosyl)acetamidine + ATP = 5-amino-1-(5-phospho-beta-D-ribosyl)imidazole + ADP + phosphate + H(+). It functions in the pathway purine metabolism; IMP biosynthesis via de novo pathway; 5-amino-1-(5-phospho-D-ribosyl)imidazole from N(2)-formyl-N(1)-(5-phospho-D-ribosyl)glycinamide: step 2/2. In Jannaschia sp. (strain CCS1), this protein is Phosphoribosylformylglycinamidine cyclo-ligase.